A 545-amino-acid polypeptide reads, in one-letter code: RNA-directed RNA polymerase beta chain (545 aa).

Residues 243 to 373 (RLAQQGSVDG…PNLRKTFVSG (131 aa)) form the RdRp catalytic domain.

Part of the viral RNA-dependent RNA polymerase complex, the other subunits are probably the host ribosomal protein S1, EF-Tu and EF-Ts.

The enzyme catalyses RNA(n) + a ribonucleoside 5'-triphosphate = RNA(n+1) + diphosphate. Its function is as follows. This is the catalytic subunit of the viral RNA-dependent RNA polymerase complex. This complex is involved in viral RNA replication that produces (+)-stranded genomes via a complementary, (-)-stranded intermediate. The protein is RNA-directed RNA polymerase beta chain of Escherichia coli (Bacteriophage MS2).